Consider the following 182-residue polypeptide: Small ribosomal subunit protein uS4c (182 aa).

Positions 12 to 31 are disordered; that stretch reads PGFTSKRPRSGSDLKNPLRS. The 62-residue stretch at 82-143 folds into the S4 RNA-binding domain; sequence MRLDNILFRL…KQRSKALIQN (62 aa).

The protein belongs to the universal ribosomal protein uS4 family. Part of the 30S ribosomal subunit. Contacts protein S5. The interaction surface between S4 and S5 is involved in control of translational fidelity.

It localises to the plastid. Its subcellular location is the chloroplast. In terms of biological role, one of the primary rRNA binding proteins, it binds directly to 16S rRNA where it nucleates assembly of the body of the 30S subunit. Functionally, with S5 and S12 plays an important role in translational accuracy. This chain is Small ribosomal subunit protein uS4c (rps4), found in Hymenocallis littoralis (Beach spider-lily).